The sequence spans 319 residues: L-tryptophan isonitrile synthase AmbI1 (319 aa).

The protein belongs to the isocyanide synthase family.

The enzyme catalyses D-ribulose 5-phosphate + L-tryptophan = (2S)-3-(1H-indol-3-yl)-2-isocyanopropanoate + hydroxyacetone + formaldehyde + phosphate + H2O + H(+). In terms of biological role, involved in the biosynthesis of ambiguines, a family of hapalindole-type alkaloids. Responsible for the synthesis of the isonitrile group on tryptophan using ribulose 5-phosphate as the source of the carbon atom. This Fischerella ambigua (strain UTEX 1903) protein is L-tryptophan isonitrile synthase AmbI1.